The following is a 132-amino-acid chain: MDTMNWLDQLKWDAQGLVPVIAQEAATGDVLMFAWMNREALAKTAELGRAVYYSRSRGKLWFKGEESGHVQQVHDIRLDCDSDVVLLKVTQLGHEPGIACHTGRHSCFFNALQNGAWQAVDPVLKDPESIYK.

Residue Asp79 coordinates Mg(2+). Cys80 contacts Zn(2+). Mg(2+) contacts are provided by Asp81 and Asp83. The Zn(2+) site is built by Cys100 and Cys107.

This sequence belongs to the PRA-CH family. Homodimer. It depends on Mg(2+) as a cofactor. Zn(2+) serves as cofactor.

Its subcellular location is the cytoplasm. The enzyme catalyses 1-(5-phospho-beta-D-ribosyl)-5'-AMP + H2O = 1-(5-phospho-beta-D-ribosyl)-5-[(5-phospho-beta-D-ribosylamino)methylideneamino]imidazole-4-carboxamide. Its pathway is amino-acid biosynthesis; L-histidine biosynthesis; L-histidine from 5-phospho-alpha-D-ribose 1-diphosphate: step 3/9. Catalyzes the hydrolysis of the adenine ring of phosphoribosyl-AMP. The chain is Phosphoribosyl-AMP cyclohydrolase from Acidovorax ebreus (strain TPSY) (Diaphorobacter sp. (strain TPSY)).